A 248-amino-acid chain; its full sequence is UPF0246 protein A1I_02510 (248 aa).

This sequence belongs to the UPF0246 family.

This is UPF0246 protein A1I_02510 from Rickettsia bellii (strain OSU 85-389).